Here is a 280-residue protein sequence, read N- to C-terminus: Extracellular metalloprotease GLRG_06286 (280 aa).

The signal sequence occupies residues 1–17; that stretch reads MQVTFTLVAALAGMASA. Residue asparagine 51 is glycosylated (N-linked (GlcNAc...) asparagine). Histidine 196 serves as a coordination point for Zn(2+). The active site involves glutamate 197. Residue histidine 200 coordinates Zn(2+). The segment at 217-236 is disordered; sequence DSIADTPAQSSPSSGCPVGR. A disulfide bridge links cysteine 232 with cysteine 259.

It belongs to the peptidase M43B family.

The protein resides in the secreted. Its function is as follows. Secreted metalloproteinase that allows assimilation of proteinaceous substrates. The protein is Extracellular metalloprotease GLRG_06286 of Colletotrichum graminicola (strain M1.001 / M2 / FGSC 10212) (Maize anthracnose fungus).